The primary structure comprises 234 residues: Transcriptional regulatory protein CseB (234 aa).

Residues 6-119 enclose the Response regulatory domain; that stretch reads HVLFVEDDDV…VLVARIRAVL (114 aa). Asp-55 is modified (4-aspartylphosphate). The ompR/PhoB-type DNA-binding region spans 140–234; that stretch reads GGVLTFGDLE…VRGFGYKLKA (95 aa).

Phosphorylated by CseC.

It is found in the cytoplasm. In terms of biological role, member of the two-component regulatory system CseB/CseC involved in the stability of the cell envelope. CseB activates transcription of RNA polymerase sigma-E factor, in response to changes in the cell envelope. The chain is Transcriptional regulatory protein CseB (cseB) from Streptomyces coelicolor (strain ATCC BAA-471 / A3(2) / M145).